The primary structure comprises 312 residues: Taste receptor type 2 member 140 (312 aa).

Residues 1-9 lie on the Extracellular side of the membrane; that stretch reads MKVTVECAL. A helical membrane pass occupies residues 10-30; it reads LITLIVEIIIGCLGNGFIAVV. Topologically, residues 31-46 are cytoplasmic; that stretch reads NIMDWTKRRRFSLVDQ. Residues 47–67 form a helical membrane-spanning segment; it reads ILTALAISRLAFVWSLLTVLV. The Extracellular segment spans residues 68–87; that stretch reads ISELHSSLLITRKMLRIINN. Residues 88-108 traverse the membrane as a helical segment; the sequence is FWTVTNHFSIWLATCLSIFYF. Topologically, residues 109 to 133 are cytoplasmic; sequence LKIANFSNSIFLSLRWRVKTVVSLT. The chain crosses the membrane as a helical span at residues 134–154; that stretch reads LLVSLLLLLVNVIIINTCIVI. The Extracellular segment spans residues 155–185; that stretch reads SVEGYKVNMSYSSHFNNNPQISRIPLFTNTM. Asparagine 162 is a glycosylation site (N-linked (GlcNAc...) asparagine). Residues 186-206 form a helical membrane-spanning segment; it reads FTFIPFTVTLTIFLLLIFSLW. Residues 207–229 lie on the Cytoplasmic side of the membrane; that stretch reads RHLKKMQHRAKGPRDPSTTAHIK. The helical transmembrane segment at 230–250 threads the bilayer; sequence ALQMVVTFLFLYTIFFLALVM. Topologically, residues 251–264 are extracellular; it reads QAWNNEIQSKTVFN. Residues 265–285 traverse the membrane as a helical segment; it reads LVFESIALAFPSGHSCVLILG. Over 286–312 the chain is Cytoplasmic; the sequence is NSKLRQAFLTIIWWLRSSFNAAELSSP.

This sequence belongs to the G-protein coupled receptor T2R family.

It is found in the membrane. Putative taste receptor which may play a role in the perception of bitterness. This chain is Taste receptor type 2 member 140, found in Rattus norvegicus (Rat).